We begin with the raw amino-acid sequence, 581 residues long: Nicotinic acid-CoA ligase pyr1 (581 aa).

AMP is bound at residue 204 to 215 (MFLTSGTSGLPK). The tract at residues 477 to 555 (EIEGILLKDP…DEIPRTGIGK (79 aa)) is AMP-binding.

This sequence belongs to the ATP-dependent AMP-binding enzyme family.

It carries out the reaction nicotinate + ATP + CoA = nicotinyl-CoA + AMP + diphosphate. It participates in secondary metabolite biosynthesis; terpenoid biosynthesis. Its function is as follows. Nicotinic acid-CoA ligase; part of the gene cluster that mediates the biosynthesis of pyripyropene A, a specific human acyl-coenzyme A:cholesterol acyltransferase 2 inhibitor. The first step of the pathway is the synthesis of nicotinyl-CoA from nicotinic acid by the nicotinic acid-CoA ligase pyr1. Nicotinyl-CoA is then a substrate of polyketide synthase pyr2 to produce 4-hydroxy-6-(3-pyridinyl)-2H-pyran-2-one (HPPO) which is further prenylated by the polyprenyl transferase pyr6 to yield farnesyl-HPPO. The next steps consist of an epoxidation of farnesyl-HPPO to epoxyfarnesyl-HPPO by FAD-dependent monooxygenase pyr5 and a cyclization of the terpenoid portion by the terpene cyclase pyr4 to yield deacetyl-pyripyropene E. The 2 cytochrome P450 monooxygenases pyr3 and pyr9, and the 2 acetyltransferases pyr7 and pyr8 are involved in the conversion of deacetyl-pyripyropene E into pyripyropene A through several cycles of oxidation and acetylation steps. Pyr7 acetylates deacetyl-pyripyropene E to pyripyropene E which is oxidized to 11-deacetyl-pyripyropene O by pyr3, which is in turn acetylated into pyripyropene O by pyr8. Pyripyropene O is then oxidized to deacetyl-pyripyropene A by pyr9. Deacetyl-pyripyropene A is finally acetylated to pyripyropene A by pyr8. The polypeptide is Nicotinic acid-CoA ligase pyr1 (Aspergillus fumigatus (strain ATCC MYA-4609 / CBS 101355 / FGSC A1100 / Af293) (Neosartorya fumigata)).